The primary structure comprises 317 residues: Phosphatidylglycerol--prolipoprotein diacylglyceryl transferase 2 (317 aa).

A run of 4 helical transmembrane segments spans residues 19–39 (IPLR…VWLG), 51–71 (GVIA…GRLY), 93–113 (VWEG…GAWI), and 120–140 (IPLP…QAIG). R141 contributes to the a 1,2-diacyl-sn-glycero-3-phospho-(1'-sn-glycerol) binding site. 3 helical membrane-spanning segments follow: residues 180–200 (PTFL…LWAA), 211–230 (FALY…YLRI), and 241–261 (LNNW…VVSA). The disordered stretch occupies residues 275-317 (GAGADGRTDDPRPADASVGLASGPPGNSTPRRATESWNVRNRS). Residues 299–317 (PGNSTPRRATESWNVRNRS) are compositionally biased toward polar residues.

This sequence belongs to the Lgt family.

It is found in the cell membrane. The catalysed reaction is L-cysteinyl-[prolipoprotein] + a 1,2-diacyl-sn-glycero-3-phospho-(1'-sn-glycerol) = an S-1,2-diacyl-sn-glyceryl-L-cysteinyl-[prolipoprotein] + sn-glycerol 1-phosphate + H(+). It functions in the pathway protein modification; lipoprotein biosynthesis (diacylglyceryl transfer). Catalyzes the transfer of the diacylglyceryl group from phosphatidylglycerol to the sulfhydryl group of the N-terminal cysteine of a prolipoprotein, the first step in the formation of mature lipoproteins. The sequence is that of Phosphatidylglycerol--prolipoprotein diacylglyceryl transferase 2 from Streptomyces coelicolor (strain ATCC BAA-471 / A3(2) / M145).